A 562-amino-acid polypeptide reads, in one-letter code: NAD-dependent malic enzyme (562 aa).

Tyr101 serves as the catalytic Proton donor. Arg154 contributes to the NAD(+) binding site. Lys172 acts as the Proton acceptor in catalysis. Residues Glu243, Asp244, and Asp267 each contribute to the a divalent metal cation site. NAD(+) contacts are provided by Asp267 and Asn415.

This sequence belongs to the malic enzymes family. Homotetramer. The cofactor is Mg(2+). It depends on Mn(2+) as a cofactor.

The enzyme catalyses (S)-malate + NAD(+) = pyruvate + CO2 + NADH. The catalysed reaction is oxaloacetate + H(+) = pyruvate + CO2. The sequence is that of NAD-dependent malic enzyme from Aliivibrio salmonicida (strain LFI1238) (Vibrio salmonicida (strain LFI1238)).